The chain runs to 397 residues: Elongation factor Tu (397 aa).

A tr-type G domain is found at 10 to 206 (KPHCNIGTIG…TIDEYVPDPE (197 aa)). A G1 region spans residues 19 to 26 (GHVDHGKT). 19 to 26 (GHVDHGKT) provides a ligand contact to GTP. Threonine 26 is a Mg(2+) binding site. The segment at 61-65 (GITIS) is G2. Positions 82 to 85 (DCPG) are G3. GTP contacts are provided by residues 82 to 86 (DCPGH) and 137 to 140 (NKCD). A G4 region spans residues 137–140 (NKCD). The interval 175-177 (SAL) is G5.

The protein belongs to the TRAFAC class translation factor GTPase superfamily. Classic translation factor GTPase family. EF-Tu/EF-1A subfamily. In terms of assembly, monomer.

Its subcellular location is the cytoplasm. The enzyme catalyses GTP + H2O = GDP + phosphate + H(+). In terms of biological role, GTP hydrolase that promotes the GTP-dependent binding of aminoacyl-tRNA to the A-site of ribosomes during protein biosynthesis. This Lachnospira eligens (strain ATCC 27750 / DSM 3376 / VPI C15-48 / C15-B4) (Eubacterium eligens) protein is Elongation factor Tu.